Reading from the N-terminus, the 770-residue chain is Multifunctional tryptophan biosynthesis protein (770 aa).

Positions 25–225 constitute a Glutamine amidotransferase type-1 domain; the sequence is NVILIDNYDS…LKLTAGTWEG (201 aa). 76–78 is an L-glutamine binding site; that stretch reads GPG. Catalysis depends on cysteine 104, which acts as the Nucleophile; for GATase activity. L-glutamine contacts are provided by residues glutamine 108 and 154–155; that span reads SL. Residues histidine 199 and glutamate 201 each act as for GATase activity in the active site. The disordered stretch occupies residues 228–251; the sequence is KHFGEQSSTTKATVPSNPPPKTDK. Over residues 232–242 the composition is skewed to polar residues; it reads EQSSTTKATVP. The indole-3-glycerol phosphate synthase stretch occupies residues 255–519; sequence ILERIYDHRR…DTATFIAELL (265 aa). Residues 535-770 are N-(5'-phosphoribosyl)anthranilate isomerase; the sequence is LVKICGTRSE…RAFVQAVRGL (236 aa).

It carries out the reaction N-(5-phospho-beta-D-ribosyl)anthranilate = 1-(2-carboxyphenylamino)-1-deoxy-D-ribulose 5-phosphate. The enzyme catalyses 1-(2-carboxyphenylamino)-1-deoxy-D-ribulose 5-phosphate + H(+) = (1S,2R)-1-C-(indol-3-yl)glycerol 3-phosphate + CO2 + H2O. It catalyses the reaction chorismate + L-glutamine = anthranilate + pyruvate + L-glutamate + H(+). It participates in amino-acid biosynthesis; L-tryptophan biosynthesis; L-tryptophan from chorismate: step 1/5. The protein operates within amino-acid biosynthesis; L-tryptophan biosynthesis; L-tryptophan from chorismate: step 3/5. It functions in the pathway amino-acid biosynthesis; L-tryptophan biosynthesis; L-tryptophan from chorismate: step 4/5. Functionally, trifunctional enzyme bearing the Gln amidotransferase (GATase) domain of anthranilate synthase, indole-glycerolphosphate synthase, and phosphoribosylanthranilate isomerase activities. This chain is Multifunctional tryptophan biosynthesis protein (trpC), found in Aspergillus niger.